The following is a 456-amino-acid chain: Bifunctional protein GlmU (456 aa).

The tract at residues 1–229 (MLNNAMSVVI…LSEVEGVNNR (229 aa)) is pyrophosphorylase. Residues 11-14 (LAAG), Lys25, Gln76, 81-82 (GT), 103-105 (YGD), Gly140, Glu154, Asn169, and Asn227 contribute to the UDP-N-acetyl-alpha-D-glucosamine site. Residue Asp105 coordinates Mg(2+). Asn227 serves as a coordination point for Mg(2+). Residues 230 to 250 (LQLSRLERVYQSEQAEKLLLA) form a linker region. The interval 251–456 (GVMLRDPARF…EGWRRPVKKK (206 aa)) is N-acetyltransferase. Positions 333 and 351 each coordinate UDP-N-acetyl-alpha-D-glucosamine. Residue His363 is the Proton acceptor of the active site. The UDP-N-acetyl-alpha-D-glucosamine site is built by Tyr366 and Asn377. Acetyl-CoA is bound by residues Ala380, 386 to 387 (NY), Ser405, Ala423, and Arg440.

In the N-terminal section; belongs to the N-acetylglucosamine-1-phosphate uridyltransferase family. It in the C-terminal section; belongs to the transferase hexapeptide repeat family. As to quaternary structure, homotrimer. Mg(2+) is required as a cofactor.

It localises to the cytoplasm. It catalyses the reaction alpha-D-glucosamine 1-phosphate + acetyl-CoA = N-acetyl-alpha-D-glucosamine 1-phosphate + CoA + H(+). It carries out the reaction N-acetyl-alpha-D-glucosamine 1-phosphate + UTP + H(+) = UDP-N-acetyl-alpha-D-glucosamine + diphosphate. The protein operates within nucleotide-sugar biosynthesis; UDP-N-acetyl-alpha-D-glucosamine biosynthesis; N-acetyl-alpha-D-glucosamine 1-phosphate from alpha-D-glucosamine 6-phosphate (route II): step 2/2. Its pathway is nucleotide-sugar biosynthesis; UDP-N-acetyl-alpha-D-glucosamine biosynthesis; UDP-N-acetyl-alpha-D-glucosamine from N-acetyl-alpha-D-glucosamine 1-phosphate: step 1/1. It participates in bacterial outer membrane biogenesis; LPS lipid A biosynthesis. Functionally, catalyzes the last two sequential reactions in the de novo biosynthetic pathway for UDP-N-acetylglucosamine (UDP-GlcNAc). The C-terminal domain catalyzes the transfer of acetyl group from acetyl coenzyme A to glucosamine-1-phosphate (GlcN-1-P) to produce N-acetylglucosamine-1-phosphate (GlcNAc-1-P), which is converted into UDP-GlcNAc by the transfer of uridine 5-monophosphate (from uridine 5-triphosphate), a reaction catalyzed by the N-terminal domain. This Escherichia coli O81 (strain ED1a) protein is Bifunctional protein GlmU.